A 25-amino-acid polypeptide reads, in one-letter code: RSVCRQIKICRRRGGCYYKCTNRPY.

Cystine bridges form between cysteine 4–cysteine 20 and cysteine 10–cysteine 16.

The protein resides in the secreted. Functionally, active against both bacteria (Gram-positive and Gram-negative) and filamentous fungi. Acts on the membrane of the bacterial cells. It destabilize a membrane by modifying its properties. This Androctonus australis (Sahara scorpion) protein is Androctonin.